The chain runs to 329 residues: Phenylalanine--tRNA ligase alpha subunit (329 aa).

A Mg(2+)-binding site is contributed by glutamate 254.

It belongs to the class-II aminoacyl-tRNA synthetase family. Phe-tRNA synthetase alpha subunit type 1 subfamily. As to quaternary structure, tetramer of two alpha and two beta subunits. It depends on Mg(2+) as a cofactor.

The protein localises to the cytoplasm. The catalysed reaction is tRNA(Phe) + L-phenylalanine + ATP = L-phenylalanyl-tRNA(Phe) + AMP + diphosphate + H(+). This Haemophilus influenzae (strain ATCC 51907 / DSM 11121 / KW20 / Rd) protein is Phenylalanine--tRNA ligase alpha subunit (pheS).